Reading from the N-terminus, the 1012-residue chain is Formate dehydrogenase 2 subunit alpha (cytochrome c-553) (1012 aa).

Positions 1–33 form a signal peptide, tat-type signal; sequence MKTTRRSFLKLVGVSVVGLSLGQLGFDLEDAQA. Residues 43–99 form the 4Fe-4S Mo/W bis-MGD-type domain; it reads AKEVGTVCPFCSVCCQVIAYVRNGKLVSTEGDPDFPVNEGALCAKGAALFSMYTNPH. [4Fe-4S] cluster contacts are provided by Cys-50, Cys-53, Cys-57, and Cys-85. Position 189 (Sec-189) interacts with W-bis(molybdopterin guanine dinucleotide). Sec-189 is a non-standard amino acid (selenocysteine). The Ca(2+) site is built by Thr-389, Arg-391, Lys-394, Leu-424, and Asn-426.

Belongs to the prokaryotic molybdopterin-containing oxidoreductase family. Heterotrimer of cytochrome c3 FDH2C and formate dehydrogenase FDH2 alpha and beta subunits that forms the FdhABC(3) complex. The cofactor is [4Fe-4S] cluster. It depends on W-bis(molybdopterin guanine dinucleotide) as a cofactor. Predicted to be exported by the Tat system. The position of the signal peptide cleavage has not been experimentally proven.

The protein resides in the periplasm. It catalyses the reaction 2 Fe(III)-[cytochrome c553] + formate = 2 Fe(II)-[cytochrome c553] + CO2 + H(+). Its function is as follows. Alpha chain of the formate dehydrogenase (FDH) that catalyzes the reversible two-electron oxidation of formate to carbon dioxide. The alpha subunit of formate dehydrogenase forms the active site. This is Formate dehydrogenase 2 subunit alpha (cytochrome c-553) from Nitratidesulfovibrio vulgaris (strain ATCC 29579 / DSM 644 / CCUG 34227 / NCIMB 8303 / VKM B-1760 / Hildenborough) (Desulfovibrio vulgaris).